The chain runs to 171 residues: MVNNRISESTTTAVSNNGSPPKACAGCGGKIADRFLLYSMDRYWHTRCLKCSCCQAQLGEIGTSCYTKSGMILCRNDYIRLFGNSGACNACGQSIPASEMVMRAQGSVYHLKCFTCATCRNRLVPGDRFHYVNGTIFCEHDRPTGLLNGHLNPLQSNPLQGSPMLPDQKVC.

The span at 1 to 19 shows a compositional bias: polar residues; that stretch reads MVNNRISESTTTAVSNNGS. The disordered stretch occupies residues 1-20; sequence MVNNRISESTTTAVSNNGSP. LIM zinc-binding domains are found at residues 22–84 and 86–148; these read KACA…LFGN and GACN…GLLN.

Its function is as follows. Acts as a positive cofactor of GATA transcription factors to establish the identity of the ventral mesoderm during gastrulation. Down-regulation in the dorsal mesoderm is necessary for the proper formation of this territory since, when present, lmo4 may bind ldb1 and restrict the availability of this cofactor for Spemman organizer transcription factors. At neurula stages, suppresses primary neuron differentiation and modulates gene expression at the Isthmic Organizer of the midbrain-hindbrain boundary. The sequence is that of LIM domain transcription factor LMO4-B (lmo4-b) from Xenopus laevis (African clawed frog).